A 932-amino-acid chain; its full sequence is UPF0182 protein Dred_1797 (932 aa).

The next 7 helical transmembrane spans lie at 11 to 31 (LVIL…GLYI), 53 to 73 (IGLR…NLML), 118 to 138 (LTLA…SSVA), 180 to 200 (ILAS…LVTD), 209 to 229 (IFRF…FFVI), 264 to 284 (YKAL…NIFL), and 292 to 312 (YAIG…PAII). The interval 861–883 (DRPQQGVPPATDQPAGQQPAPEK) is disordered.

The protein belongs to the UPF0182 family.

The protein resides in the cell membrane. This chain is UPF0182 protein Dred_1797, found in Desulforamulus reducens (strain ATCC BAA-1160 / DSM 100696 / MI-1) (Desulfotomaculum reducens).